Consider the following 61-residue polypeptide: Large ribosomal subunit protein uL29 (61 aa).

Belongs to the universal ribosomal protein uL29 family.

This Campylobacter jejuni subsp. jejuni serotype O:6 (strain 81116 / NCTC 11828) protein is Large ribosomal subunit protein uL29.